Reading from the N-terminus, the 116-residue chain is Large ribosomal subunit protein bL19 (116 aa).

It belongs to the bacterial ribosomal protein bL19 family.

This protein is located at the 30S-50S ribosomal subunit interface and may play a role in the structure and function of the aminoacyl-tRNA binding site. The chain is Large ribosomal subunit protein bL19 from Haemophilus ducreyi (strain 35000HP / ATCC 700724).